Consider the following 167-residue polypeptide: ATP synthase subunit delta, mitochondrial (167 aa).

Residues 1-28 (MFRLSNYMLRKSQFPQGLVRAPFGIRGY) constitute a mitochondrion transit peptide.

It belongs to the ATPase epsilon chain family. As to quaternary structure, F-type ATPases have 2 components, CF(1) - the catalytic core - and CF(0) - the membrane proton channel. CF(1) has five subunits: alpha(3), beta(3), gamma(1), delta(1), epsilon(1). CF(0) has three main subunits: a, b and c.

The protein localises to the mitochondrion. Its subcellular location is the mitochondrion inner membrane. Its function is as follows. Mitochondrial membrane ATP synthase (F(1)F(0) ATP synthase or Complex V) produces ATP from ADP in the presence of a proton gradient across the membrane which is generated by electron transport complexes of the respiratory chain. F-type ATPases consist of two structural domains, F(1) - containing the extramembraneous catalytic core, and F(0) - containing the membrane proton channel, linked together by a central stalk and a peripheral stalk. During catalysis, ATP turnover in the catalytic domain of F(1) is coupled via a rotary mechanism of the central stalk subunits to proton translocation. Part of the complex F(1) domain and of the central stalk which is part of the complex rotary element. Rotation of the central stalk against the surrounding alpha(3)beta(3) subunits leads to hydrolysis of ATP in three separate catalytic sites on the beta subunits. This is ATP synthase subunit delta, mitochondrial (atp16) from Schizosaccharomyces pombe (strain 972 / ATCC 24843) (Fission yeast).